The following is a 264-amino-acid chain: tRNA pseudouridine synthase A (264 aa).

The active-site Nucleophile is Asp-51. Position 109 (Tyr-109) interacts with substrate.

Belongs to the tRNA pseudouridine synthase TruA family. Homodimer.

The enzyme catalyses uridine(38/39/40) in tRNA = pseudouridine(38/39/40) in tRNA. Functionally, formation of pseudouridine at positions 38, 39 and 40 in the anticodon stem and loop of transfer RNAs. The chain is tRNA pseudouridine synthase A from Staphylococcus aureus (strain MRSA252).